A 132-amino-acid polypeptide reads, in one-letter code: Small ribosomal subunit protein uS8 (132 aa).

The protein belongs to the universal ribosomal protein uS8 family. In terms of assembly, part of the 30S ribosomal subunit. Contacts proteins S5 and S12.

One of the primary rRNA binding proteins, it binds directly to 16S rRNA central domain where it helps coordinate assembly of the platform of the 30S subunit. This is Small ribosomal subunit protein uS8 from Mycobacterium marinum (strain ATCC BAA-535 / M).